The primary structure comprises 208 residues: MSEDRPTLLVGLGNPGQKYAETRHNIGFMLIDRLAQDWGVKLSEDRKFQGEYGETAVPGLGKIRLLKPTTFMNQSGRSLRAVLDWYKLTPQQILVIYDDMDLPLGRLRLRQSGSAGTHNGMKSIISHLSSKDFPRLRLGISLPRSQSNDRHDATVSHVLGKFAVSEQSLLKQVLDLAQEATETALRSGVETAMNRYNARSLEAPAPVA.

Tyr-19 is a tRNA binding site. His-24 acts as the Proton acceptor in catalysis. Residues Phe-71, Asn-73, and Asn-119 each contribute to the tRNA site.

It belongs to the PTH family. Monomer.

The protein resides in the cytoplasm. The enzyme catalyses an N-acyl-L-alpha-aminoacyl-tRNA + H2O = an N-acyl-L-amino acid + a tRNA + H(+). Its function is as follows. Hydrolyzes ribosome-free peptidyl-tRNAs (with 1 or more amino acids incorporated), which drop off the ribosome during protein synthesis, or as a result of ribosome stalling. Functionally, catalyzes the release of premature peptidyl moieties from peptidyl-tRNA molecules trapped in stalled 50S ribosomal subunits, and thus maintains levels of free tRNAs and 50S ribosomes. In Synechococcus elongatus (strain ATCC 33912 / PCC 7942 / FACHB-805) (Anacystis nidulans R2), this protein is Peptidyl-tRNA hydrolase.